A 235-amino-acid polypeptide reads, in one-letter code: Large ribosomal subunit protein uL1 (235 aa).

Belongs to the universal ribosomal protein uL1 family. Part of the 50S ribosomal subunit.

Functionally, binds directly to 23S rRNA. The L1 stalk is quite mobile in the ribosome, and is involved in E site tRNA release. Protein L1 is also a translational repressor protein, it controls the translation of the L11 operon by binding to its mRNA. In Halothermothrix orenii (strain H 168 / OCM 544 / DSM 9562), this protein is Large ribosomal subunit protein uL1.